The primary structure comprises 1480 residues: Nonribosomal peptide synthetase inpA (1480 aa).

A compositionally biased stretch (low complexity) spans 1–17; the sequence is MSHSMSSSSSSSSSSSS. Residues 1-24 form a disordered region; sequence MSHSMSSSSSSSSSSSSSRDEGQS. Residues 44–458 are condensation; it reads VQDVYPCTPL…QLISPQDLDQ (415 aa). The tract at residues 479 to 871 is adenylation; the sequence is QRHIDTRPDA…GRKDSQVKIR (393 aa). Residues 1003–1082 enclose the Carrier domain; the sequence is DSTNKVALRL…GLAAMITSPH (80 aa). Serine 1041 is modified (O-(pantetheine 4'-phosphoryl)serine). A thioesterase (TE) domain region spans residues 1117–1436; it reads KVFLTGATGL…VLAMLQDPQM (320 aa).

The protein belongs to the NRP synthetase family.

Its pathway is secondary metabolite biosynthesis. Functionally, nonribosomal peptide synthetase; part of the inp gene cluster that mediates the biosynthesis of fellutamide B, a mycotoxin that acts as a proteasome inhibitor. In the first step of fellutabmide B biosynthesis, inpC activates 3-hydroxydodecanoic acid to generate 3-hydroxydodecanoyl-AMP that is then loaded onto the T0 domain of inpB. The 3-hydroxydodecanoyl-S-phosphopantetheinyl-T0 is sequentially extended with L-Asn and L-Gln by the two CAT modules of inpB. The linear lipodipeptide from inpB is then transferred onto inpA for the addition of the third amino acid, L-Leu. Reductive releasing of the lipotripeptide by the TE domain of inpA produces (2S)-fellutamide B. InpF might be involved in the release and transfer of the lipodipeptide from inpB to inpA. The inp cluster-encoded proteasome subunit inpE confers resistance to internally produced fellutamides. The MFS efflux transporter inpD may contribute to fellutamide resistance as well. The protein is Nonribosomal peptide synthetase inpA of Emericella nidulans (strain FGSC A4 / ATCC 38163 / CBS 112.46 / NRRL 194 / M139) (Aspergillus nidulans).